The chain runs to 470 residues: Glutamate--tRNA ligase (470 aa).

The 'HIGH' region signature appears at 9-19; it reads PSPTGFLHVGG. The short motif at 236-240 is the 'KMSKS' region element; sequence RLSKR. Residue lysine 239 participates in ATP binding.

The protein belongs to the class-I aminoacyl-tRNA synthetase family. Glutamate--tRNA ligase type 1 subfamily. In terms of assembly, monomer.

Its subcellular location is the cytoplasm. It catalyses the reaction tRNA(Glu) + L-glutamate + ATP = L-glutamyl-tRNA(Glu) + AMP + diphosphate. Its function is as follows. Catalyzes the attachment of glutamate to tRNA(Glu) in a two-step reaction: glutamate is first activated by ATP to form Glu-AMP and then transferred to the acceptor end of tRNA(Glu). This Legionella pneumophila (strain Lens) protein is Glutamate--tRNA ligase.